A 116-amino-acid polypeptide reads, in one-letter code: Non-specific lipid-transfer protein (116 aa).

The first 25 residues, 1-25 (MAKMAMMVLCAGVTCMVVGAPYTEA), serve as a signal peptide directing secretion. 4 cysteine pairs are disulfide-bonded: Cys-28/Cys-75, Cys-38/Cys-52, Cys-53/Cys-98, and Cys-73/Cys-112.

It belongs to the plant LTP family.

In terms of biological role, plant non-specific lipid-transfer proteins transfer phospholipids as well as galactolipids across membranes. May play a role in wax or cutin deposition in the cell walls of expanding epidermal cells and certain secretory tissues. The protein is Non-specific lipid-transfer protein of Helianthus annuus (Common sunflower).